The following is a 426-amino-acid chain: Putative two-component response regulator ARR20 (426 aa).

Positions 40-155 (SNRVLLVGAD…VIAVLWRHVY (116 aa)) constitute a Response regulatory domain. At aspartate 91 the chain carries 4-aspartylphosphate. Residues 161 to 216 (KSGLDKPGESGTVESDPDEYDDLEQDNLYESNEEGSKNTCDHKEEKSPTKKPRMQW) are disordered. Over residues 175-193 (SDPDEYDDLEQDNLYESNE) the composition is skewed to acidic residues. Residues 194–208 (EGSKNTCDHKEEKSP) are compositionally biased toward basic and acidic residues. The Nuclear localization signal motif lies at 210–213 (KKPR). A DNA-binding region (myb-like GARP) is located at residues 213-268 (RMQWTPELHHKFEVAVEKMGSLEKAFPKTILKYMQEELNVQGLTRNNVASHLQKYR).

This sequence belongs to the ARR family. Type-B subfamily. In terms of assembly, binds the target DNA as a monomer. Two-component system major event consists of a His-to-Asp phosphorelay between a sensor histidine kinase (HK) and a response regulator (RR). In plants, the His-to-Asp phosphorelay involves an additional intermediate named Histidine-containing phosphotransfer protein (HPt). This multistep phosphorelay consists of a His-Asp-His-Asp sequential transfer of a phosphate group between first a His and an Asp of the HK protein, followed by the transfer to a conserved His of the HPt protein and finally the transfer to an Asp in the receiver domain of the RR protein. Predominantly expressed in mature pistil tip. Also detected in the shoot apical meristem as well as vascular tissue and hydathodes of the leaves.

The protein localises to the nucleus. In terms of biological role, putative transcriptional activator that binds specifically to the DNA sequence 5'-[AG]GATT-3'. Functions as a response regulator involved in His-to-Asp phosphorelay signal transduction system. Phosphorylation of the Asp residue in the receiver domain activates the ability of the protein to promote the transcription of target genes. Could directly activate some type-A response regulators in response to cytokinins. This chain is Putative two-component response regulator ARR20 (ARR20), found in Arabidopsis thaliana (Mouse-ear cress).